A 184-amino-acid polypeptide reads, in one-letter code: J-type co-chaperone JAC1, mitochondrial (184 aa).

Residues 1-10 (MLKYLVQRRF) constitute a mitochondrion transit peptide. A J domain is found at 13 to 82 (TFYELFPKTF…LRRSQYMLKL (70 aa)). Positions 48-50 (HPD) match the HSP70 binding motif. The interaction with ISU1 stretch occupies residues 71–184 (DPLRRSQYML…APGKQLEMNH (114 aa)).

This sequence belongs to the HscB family. In terms of assembly, interacts with ISU1 and SSQ1.

The protein localises to the mitochondrion matrix. Co-chaperone required for the assembly of iron-sulfur (Fe/S) clusters in mitochondria. Stimulates the ATPase activity of its specialized Hsp70 chaperone partner SSQ1, to mediate the transfer of iron-sulfur clusters from ISU1 to GRX5. Binds to the substrate protein ISU1 and targets it to SSQ1. The chain is J-type co-chaperone JAC1, mitochondrial from Saccharomyces cerevisiae (strain ATCC 204508 / S288c) (Baker's yeast).